Consider the following 113-residue polypeptide: Protein MGF 110-2L (113 aa).

Residues M1–T31 form the signal peptide.

This sequence belongs to the asfivirus MGF 110 family.

Plays a role in virus cell tropism, and may be required for efficient virus replication in macrophages. This African swine fever virus (isolate Pig/Kenya/KEN-50/1950) (ASFV) protein is Protein MGF 110-2L.